Consider the following 345-residue polypeptide: Small ribosomal subunit protein mS45 (345 aa).

Residues 1–27 (MSYGLTGTSSKLRGTSSIFSWTQVRHF) constitute a mitochondrion transit peptide.

This sequence belongs to the mitochondrion-specific ribosomal protein mS45 family. As to quaternary structure, component of the mitochondrial small ribosomal subunit (mt-SSU). Mature yeast 74S mitochondrial ribosomes consist of a small (37S) and a large (54S) subunit. The 37S small subunit contains a 15S ribosomal RNA (15S mt-rRNA) and 34 different proteins. The 54S large subunit contains a 21S rRNA (21S mt-rRNA) and 46 different proteins.

Its subcellular location is the mitochondrion. Its function is as follows. Component of the mitochondrial ribosome (mitoribosome), a dedicated translation machinery responsible for the synthesis of mitochondrial genome-encoded proteins, including at least some of the essential transmembrane subunits of the mitochondrial respiratory chain. The mitoribosomes are attached to the mitochondrial inner membrane and translation products are cotranslationally integrated into the membrane. In Saccharomyces cerevisiae (strain ATCC 204508 / S288c) (Baker's yeast), this protein is Small ribosomal subunit protein mS45 (MRPS35).